We begin with the raw amino-acid sequence, 650 residues long: MATKIRILPENLTNKIAAGEVVERPASVAKELVENALDAGSKEVVVEIESGGRRLIKVSDTGCGMSRDDALLALERHATSKIATDEDLFSLCTLGFRGEALPSVASVSRLTISTRTSDSVEGTEIYAEGGRIKEVKECGMAVGTVISVRNLFFNTPARLKFMKSAETEGGHVGELLTRLAISRPEVRFTYKNDGKVMFRALDADLKERVATMLGRSISSFLYPVSYQEGGLKVSGLVAAPECSRSAGSHLYTYINGRFIKDKVVQHAILQAYRNFLERGRYPVVAVFIDIAPGEVDVNVHPTKHEVRFREQGRVHDAIQKAVESVLKETPWLKRSAVAAASRPAEKGGGALRPFSSMEASQAALPVTPQPRPALTPGHPDPPPQAQLQQPLVSESRVAEVRELLVNFQPRPQPPLRPQYRGSVAPREGSPYAPIAAAPVPASEPQSAAQDSDHVAAGYFSSLGVIGQFNASYILCQRGTDLILIDQHAAHERVAFEKLKGQFAGREVDSQGLLFPETMEFSFRESAVLREHQAELARLGFEFEEFGGNTWLLKGVPQVLSATRYVDTIRDILEELGSLSRSRAFSDIQEDLLARIACHSVVRGKRTLSPVEIAALFKQMDETDFSSNCPHGRPVMQTLTLAEVEKMFKRI.

Disordered stretches follow at residues 358–392 (EASQ…QPLV) and 408–448 (QPRP…QSAA). Residues 367 to 384 (TPQPRPALTPGHPDPPPQ) show a composition bias toward pro residues. Positions 430-444 (PYAPIAAAPVPASEP) are enriched in low complexity.

It belongs to the DNA mismatch repair MutL/HexB family.

Its function is as follows. This protein is involved in the repair of mismatches in DNA. It is required for dam-dependent methyl-directed DNA mismatch repair. May act as a 'molecular matchmaker', a protein that promotes the formation of a stable complex between two or more DNA-binding proteins in an ATP-dependent manner without itself being part of a final effector complex. The chain is DNA mismatch repair protein MutL from Geobacter sp. (strain M21).